The primary structure comprises 561 residues: Oligo-1,6-glucosidase 1 (561 aa).

Ca(2+)-binding residues include D20, N22, D24, F26, and D28. The Nucleophile role is filled by D199. E255 serves as the catalytic Proton donor.

This sequence belongs to the glycosyl hydrolase 13 family.

It is found in the cytoplasm. The enzyme catalyses Hydrolysis of (1-&gt;6)-alpha-D-glucosidic linkages in some oligosaccharides produced from starch and glycogen by alpha-amylase, and in isomaltose.. Its function is as follows. Hydrolyzes various disaccharides such as sucrose, maltose, and isomaltose with different efficiencies. Also hydrolyzes longer maltodextrins from maltotriose up to maltohexaose, but not maltoheptaose, palatinose, isomaltotriose, or isomaltotetraose. The polypeptide is Oligo-1,6-glucosidase 1 (malL) (Bacillus subtilis (strain 168)).